The chain runs to 217 residues: CD99 antigen-like protein 2 (217 aa).

Positions 1–25 are cleaved as a signal peptide; sequence MVAWRWACLICLAFSLTTLVQRGSG. Over 26–141 the chain is Extracellular; sequence DTGGFRLEDA…DDSGMSAETG (116 aa). A disordered region spans residues 36-136; the sequence is VEGTSSVKQR…GGDNSDDSGM (101 aa). Over residues 50–64 the composition is skewed to low complexity; the sequence is TTTTRRPGATRAPAK. Positions 70-82 are enriched in acidic residues; it reads AEDDFNLADALDD. Residues 83–92 are compositionally biased toward basic and acidic residues; that stretch reads QNDRDHDRKK. S134 carries O-linked (Xyl...) (chondroitin sulfate) serine glycosylation. The chain crosses the membrane as a helical span at residues 142 to 162; the sequence is TIAGVASALAMALIGAVSSYI. The Cytoplasmic portion of the chain corresponds to 163 to 217; it reads SYQQKKFCFSIQQGLNADYVKGENLEAVVCEEPQVKYSALQTQSTEPPPPEPPRI.

It belongs to the CD99 family. Post-translationally, O-glycosylated.

Its subcellular location is the cell membrane. The protein localises to the cell junction. It localises to the secreted. Functionally, plays a role in a late step of leukocyte extravasation helping cells to overcome the endothelial basement membrane. Acts at the same site as, but independently of, PECAM1. Homophilic adhesion molecule, but these interactions may not be required for cell aggregation. The sequence is that of CD99 antigen-like protein 2 (CD99L2) from Bos taurus (Bovine).